The following is a 355-amino-acid chain: Poly(3-hydroxyalkanoate) polymerase subunit PhaC (355 aa).

An AB hydrolase-1 domain is found at 68 to 333 (PLLIVYALVN…LAFPGGHIGI (266 aa)). Cys-148 is an active-site residue.

The protein belongs to the PHA/PHB synthase family. Type III PhaC subfamily. As to quaternary structure, forms a heterodimer with PhaE, which may multimerize in the presence of 3-hydroxybutyryl-CoA.

Its subcellular location is the cytoplasm. The catalysed reaction is (3R)-3-hydroxybutanoyl-CoA + [(3R)-hydroxybutanoate](n) = [(3R)-hydroxybutanoate](n+1) + CoA. Its pathway is biopolymer metabolism; poly-(R)-3-hydroxybutanoate biosynthesis. Polymerizes D(-)-3-hydroxybutyryl-CoA to create PHB which consists of thousands of hydroxybutyrate molecules linked end to end. PHB serves as an intracellular energy reserve material when cells grow under conditions of nutrient limitation. This chain is Poly(3-hydroxyalkanoate) polymerase subunit PhaC, found in Thiocystis violacea.